The sequence spans 1000 residues: Bifunctional glutamine synthetase adenylyltransferase/adenylyl-removing enzyme (1000 aa).

The segment at 1–481 (MTAPGRRSST…LHEKLFYRPL (481 aa)) is adenylyl removase. The segment at 487–1000 (QLAPGEARLS…AVVDEQFYGA (514 aa)) is adenylyl transferase.

It belongs to the GlnE family. Requires Mg(2+) as cofactor.

It carries out the reaction [glutamine synthetase]-O(4)-(5'-adenylyl)-L-tyrosine + phosphate = [glutamine synthetase]-L-tyrosine + ADP. The catalysed reaction is [glutamine synthetase]-L-tyrosine + ATP = [glutamine synthetase]-O(4)-(5'-adenylyl)-L-tyrosine + diphosphate. Its function is as follows. Involved in the regulation of glutamine synthetase GlnA, a key enzyme in the process to assimilate ammonia. When cellular nitrogen levels are high, the C-terminal adenylyl transferase (AT) inactivates GlnA by covalent transfer of an adenylyl group from ATP to specific tyrosine residue of GlnA, thus reducing its activity. Conversely, when nitrogen levels are low, the N-terminal adenylyl removase (AR) activates GlnA by removing the adenylyl group by phosphorolysis, increasing its activity. The regulatory region of GlnE binds the signal transduction protein PII (GlnB) which indicates the nitrogen status of the cell. This chain is Bifunctional glutamine synthetase adenylyltransferase/adenylyl-removing enzyme, found in Streptomyces avermitilis (strain ATCC 31267 / DSM 46492 / JCM 5070 / NBRC 14893 / NCIMB 12804 / NRRL 8165 / MA-4680).